The following is a 378-amino-acid chain: Protein RecA (378 aa).

79-86 (GPESSGKT) lines the ATP pocket.

It belongs to the RecA family.

The protein resides in the cytoplasm. Functionally, can catalyze the hydrolysis of ATP in the presence of single-stranded DNA, the ATP-dependent uptake of single-stranded DNA by duplex DNA, and the ATP-dependent hybridization of homologous single-stranded DNAs. It interacts with LexA causing its activation and leading to its autocatalytic cleavage. This Streptococcus pyogenes serotype M1 protein is Protein RecA.